We begin with the raw amino-acid sequence, 154 residues long: Oleosin 16.4 kDa (154 aa).

Alanine 2 carries the post-translational modification N-acetylalanine. Positions 2 to 33 (ADRDRSYRTFDQVVRGDRTNYQSGPSTTQVLT) are polar. A run of 3 helical transmembrane segments spans residues 31–51 (VLTV…AGLT), 65–85 (LFVI…MAVA), and 86–106 (GFLS…YVFN). Positions 34-105 (VLTLLPIGGT…TGLSSLSYVF (72 aa)) are hydrophobic.

It belongs to the oleosin family.

The protein localises to the lipid droplet. It is found in the membrane. Functionally, may have a structural role to stabilize the lipid body during desiccation of the seed by preventing coalescence of the oil. Probably interacts with both lipid and phospholipid moieties of lipid bodies. May also provide recognition signals for specific lipase anchorage in lipolysis during seedling growth. The protein is Oleosin 16.4 kDa (MATP7) of Gossypium hirsutum (Upland cotton).